The primary structure comprises 292 residues: MNERYELNKNLAQMLKGGVIMDVTTPEEAIIAEKAGAVAVMALERVPADIRARGGVARMSDPKIIKEIKAAVSIPVMAKVRIGHFVEAQILEALGIDFIDESEVLTPADEMYHINKWDFKVPFVCGAKNLGEALRRIAEGASMIRTKGEAGTGNVVEAVRHMRMINAEIKRLTTLGEEELMAAAKELQAPYDLVKYVAQHGKLPVVNFAAGGIATPADAALMMQLGADGVFVGSGIFKSQNPEKMAAAIVKAVTYYDKPEILAEVSEGLGEAMTGIDIRQLEEKDLYATRGW.

Aspartate 22 serves as a coordination point for D-ribose 5-phosphate. Lysine 79 acts as the Schiff-base intermediate with D-ribose 5-phosphate in catalysis. Glycine 151 lines the D-ribose 5-phosphate pocket. A D-glyceraldehyde 3-phosphate-binding site is contributed by arginine 163. D-ribose 5-phosphate is bound by residues glycine 212 and 233–234 (GS).

The protein belongs to the PdxS/SNZ family. In terms of assembly, in the presence of PdxT, forms a dodecamer of heterodimers.

The enzyme catalyses aldehydo-D-ribose 5-phosphate + D-glyceraldehyde 3-phosphate + L-glutamine = pyridoxal 5'-phosphate + L-glutamate + phosphate + 3 H2O + H(+). Its pathway is cofactor biosynthesis; pyridoxal 5'-phosphate biosynthesis. Functionally, catalyzes the formation of pyridoxal 5'-phosphate from ribose 5-phosphate (RBP), glyceraldehyde 3-phosphate (G3P) and ammonia. The ammonia is provided by the PdxT subunit. Can also use ribulose 5-phosphate and dihydroxyacetone phosphate as substrates, resulting from enzyme-catalyzed isomerization of RBP and G3P, respectively. This chain is Pyridoxal 5'-phosphate synthase subunit PdxS, found in Caldanaerobacter subterraneus subsp. tengcongensis (strain DSM 15242 / JCM 11007 / NBRC 100824 / MB4) (Thermoanaerobacter tengcongensis).